An 892-amino-acid chain; its full sequence is Exo-beta-D-glucosaminidase (892 aa).

Positions 1-18 (MLANAIAALLLGSGIASA) are cleaved as a signal peptide. Positions 19–28 (AGHGSPLTSK) are excised as a propeptide. N-linked (GlcNAc...) asparagine glycans are attached at residues N196, N336, and N440. D464 (proton donor) is an active-site residue. E539 acts as the Nucleophile in catalysis. Residues N557, N578, N689, and N825 are each glycosylated (N-linked (GlcNAc...) asparagine).

It belongs to the glycosyl hydrolase 2 family. As to quaternary structure, monomer.

It is found in the secreted. Its subcellular location is the extracellular space. The enzyme catalyses Hydrolysis of chitosan or chitosan oligosaccharides to remove successive D-glucosamine residues from the non-reducing termini.. Hydrolyzes chitosan and chitooligosaccharides with retention of anomeric configuration. Has no activity against beta-D-galactoside, beta-D-glucuronide, beta-D-mannoside, chitin, glycol chitosan, cellulose, N,N'-diacetylchitibiose and pNP-GlcNAc. This Hypocrea jecorina (Trichoderma reesei) protein is Exo-beta-D-glucosaminidase.